Consider the following 248-residue polypeptide: DnaA regulatory inactivator Hda (248 aa).

It belongs to the DnaA family. HdA subfamily. In terms of assembly, the active form seems to be an ADP-bound monomer. Forms the RIDA complex (regulatory inactivation of DnaA) of ATP-DnaA, ADP-Hda and the DNA-loaded beta sliding clamp (dnaN).

Functionally, mediates the interaction of DNA replication initiator protein DnaA with DNA polymerase subunit beta sliding clamp (dnaN). Stimulates hydrolysis of ATP-DnaA to ADP-DnaA, rendering DnaA inactive for reinitiation, a process called regulatory inhibition of DnaA or RIDA. This chain is DnaA regulatory inactivator Hda, found in Proteus mirabilis (strain HI4320).